The following is a 147-amino-acid chain: Acidic phospholipase A2 1 (147 aa).

An N-terminal signal peptide occupies residues methionine 1 to alanine 19. The propeptide occupies alanine 20–leucine 27. 7 disulfides stabilise this stretch: cysteine 38–cysteine 99, cysteine 54–cysteine 146, cysteine 56–cysteine 72, cysteine 71–cysteine 127, cysteine 78–cysteine 120, cysteine 88–cysteine 113, and cysteine 106–cysteine 118. The Ca(2+) site is built by tyrosine 55, glycine 57, and glycine 59. Histidine 75 is an active-site residue. Aspartate 76 contacts Ca(2+). Aspartate 121 is an active-site residue.

It belongs to the phospholipase A2 family. Group I subfamily. D49 sub-subfamily. The cofactor is Ca(2+). Expressed by the venom gland.

The protein resides in the secreted. It catalyses the reaction a 1,2-diacyl-sn-glycero-3-phosphocholine + H2O = a 1-acyl-sn-glycero-3-phosphocholine + a fatty acid + H(+). Its function is as follows. PLA2 catalyzes the calcium-dependent hydrolysis of the 2-acyl groups in 3-sn-phosphoglycerides. This Bungarus flaviceps flaviceps (Red-headed krait) protein is Acidic phospholipase A2 1.